A 645-amino-acid chain; its full sequence is Cell pattern formation-associated protein stuA (645 aa).

Residues 1-52 form a disordered region; the sequence is MNQMQPYADVHQPHMSTAAHAPASGPPAGLSHYSYPHQPSMMQPQQQQHQYG. Residues 18 to 52 show a composition bias toward low complexity; the sequence is AAHAPASGPPAGLSHYSYPHQPSMMQPQQQQHQYG. One can recognise an HTH APSES-type domain in the interval 124 to 230; sequence RVTATLWEDE…HDIGALLYHP (107 aa). Residues 158-179 constitute a DNA-binding region (H-T-H motif); sequence GTKLLNVAGMTRGRRDGILKSE. Positions 246-645 are disordered; that stretch reads VDRNRRPDSM…HTLAAQRARR (400 aa). 2 stretches are compositionally biased toward polar residues: residues 254-271 and 279-288; these read SMQTQQRYMAGPTTSQAP and MTNSVGSAMS. Positions 317 to 330 are enriched in low complexity; sequence SASSMMGMGNQGSS. Residues 336 to 365 are compositionally biased toward polar residues; it reads ANVQQHPQGNQPLSIDTGLSNARSVPTTPA. Residues 469-481 are compositionally biased toward low complexity; it reads PYNGNRGPYGYNP. Composition is skewed to polar residues over residues 502 to 542 and 569 to 584; these read SPHQ…NLYN and YASQGYAPTNGVNSSG. A nuclear localization domain region spans residues 585-613; it reads KRGRDEEDAETYRPDSVQGDDMGGLKRRK. Positions 586-597 are enriched in basic and acidic residues; that stretch reads RGRDEEDAETYR.

This sequence belongs to the EFG1/PHD1/stuA family.

Its subcellular location is the nucleus. Its function is as follows. Transcription factor that regulates asexual reproduction. Binds the StuA-response elements (StRE) with the consensus sequence 5'-(A/T)CGCG(T/A)N(A/C)-3' at the promoters of target genes. Regulates the expression of several effector genes (AvrLm1, AvrLm6 and AvrLm4-7) during infection stage. The sequence is that of Cell pattern formation-associated protein stuA from Leptosphaeria maculans (strain JN3 / isolate v23.1.3 / race Av1-4-5-6-7-8) (Blackleg fungus).